The chain runs to 1053 residues: Zinc finger and BTB domain-containing protein 11 (1053 aa).

Positions 141–156 (LDLESGEESNESEDDL) are enriched in acidic residues. The tract at residues 141–173 (LDLESGEESNESEDDLSNFTSSPTTASKPAKKK) is disordered. The segment covering 157–168 (SNFTSSPTTASK) has biased composition (low complexity). The 69-residue stretch at 214–282 (CDVTLLIEGE…AYTSVLSFDF (69 aa)) folds into the BTB domain. The segment at 546-566 (LVQRGKKMKQPKRDAKENTEE) is disordered. Basic and acidic residues predominate over residues 556–566 (PKRDAKENTEE). 2 consecutive C2H2-type zinc fingers follow at residues 569 to 591 (HKCG…KLKH) and 597 to 619 (YKCP…LIRH). The interval 619–643 (HTRKDAPSSSSSNSTSNEASGTSSE) is disordered. The span at 626–642 (SSSSSNSTSNEASGTSS) shows a compositional bias: low complexity. 10 consecutive C2H2-type zinc fingers follow at residues 651 to 673 (FICS…MLKH), 679 to 701 (HACQ…QSLH), 707 to 729 (FQCE…MSIH), 735 to 757 (YLCS…FKKH), 766 to 788 (YHCT…MNKH), 794 to 816 (FQCQ…VKSH), 822 to 846 (YRCN…KATH), 858 to 880 (RVCE…MNNH), 886 to 908 (FECL…VRTH), and 914 to 937 (YVCP…TKFH). A Glycyl lysine isopeptide (Lys-Gly) (interchain with G-Cter in SUMO2) cross-link involves residue K1043. At S1050 the chain carries Phosphoserine.

It localises to the nucleus. Its subcellular location is the nucleolus. Functionally, may be involved in transcriptional regulation. The polypeptide is Zinc finger and BTB domain-containing protein 11 (Homo sapiens (Human)).